A 190-amino-acid chain; its full sequence is Cytidylate kinase (190 aa).

An ATP-binding site is contributed by 7-15; sequence GKIGSGKST.

It belongs to the cytidylate kinase family. Type 2 subfamily.

It is found in the cytoplasm. It catalyses the reaction CMP + ATP = CDP + ADP. It carries out the reaction dCMP + ATP = dCDP + ADP. The polypeptide is Cytidylate kinase (Thermoplasma volcanium (strain ATCC 51530 / DSM 4299 / JCM 9571 / NBRC 15438 / GSS1)).